A 386-amino-acid polypeptide reads, in one-letter code: Putative gustatory receptor 92a (386 aa).

At 1-14 (MFEFLHQMSAPKLS) the chain is on the cytoplasmic side. Residues 15-35 (TSILRYIFRYAQFIGVIFFCL) form a helical membrane-spanning segment. The Extracellular segment spans residues 36–79 (HTRKDDKTVFIRNWLKWLNVTHRIITFTRFFWVYIASISIKTNR). N-linked (GlcNAc...) asparagine glycosylation occurs at Asn-54. The helical transmembrane segment at 80 to 100 (VLQVLHGMRLVLSIPNVAVIL) threads the bilayer. At 101–141 (CYHIFRGPEIIDLINQFLRLFRQVSDLFKTKTPGFGGRREL) the chain is on the cytoplasmic side. A helical transmembrane segment spans residues 142–162 (ILILLNLISFAHEQTYLWFTI). Over 163 to 169 (RKGFSWR) the chain is Extracellular. A helical membrane pass occupies residues 170–190 (FLIDWWCDFYLVSATNIFIHI). The Cytoplasmic segment spans residues 191 to 256 (NSIGYLSLGV…YHTSIMFHKL (66 aa)). A helical transmembrane segment spans residues 257–277 (FVPLLFLALIYKVLLIALIGF). The Extracellular segment spans residues 278 to 287 (NVAVEFYLNS). The chain crosses the membrane as a helical span at residues 288–308 (FIFWILLGKHVLDLFLVTVSV). Over 309 to 356 (EGAVNQFLNIGMQFGNVGDLSKFQTTLDTLFLHLRLGHFRVSILGLFD) the chain is Cytoplasmic. The helical transmembrane segment at 357–377 (VTQMQYLQFLSALLSGLAFIA) threads the bilayer. The Extracellular segment spans residues 378-386 (QYRMQVGNG).

This sequence belongs to the insect chemoreceptor superfamily. Gustatory receptor (GR) family. Gr93a subfamily.

It localises to the cell membrane. Probable gustatory receptor which mediates acceptance or avoidance behavior, depending on its substrates. In Drosophila melanogaster (Fruit fly), this protein is Putative gustatory receptor 92a (Gr92a).